The sequence spans 94 residues: Co-chaperonin GroES (94 aa).

It belongs to the GroES chaperonin family. In terms of assembly, heptamer of 7 subunits arranged in a ring. Interacts with the chaperonin GroEL.

It is found in the cytoplasm. Together with the chaperonin GroEL, plays an essential role in assisting protein folding. The GroEL-GroES system forms a nano-cage that allows encapsulation of the non-native substrate proteins and provides a physical environment optimized to promote and accelerate protein folding. GroES binds to the apical surface of the GroEL ring, thereby capping the opening of the GroEL channel. The chain is Co-chaperonin GroES from Anoxybacillus flavithermus (strain DSM 21510 / WK1).